A 316-amino-acid polypeptide reads, in one-letter code: Annexin A13 (316 aa).

Glycine 2 carries N-myristoyl glycine lipidation. Annexin repeat units follow at residues 14 to 85 (FDVD…ALLD), 86 to 157 (RPSE…SLLQ), 169 to 241 (DLAG…TLVR), and 245 to 316 (DCED…ALLH).

This sequence belongs to the annexin family. In terms of assembly, monomer and homodimer. In terms of tissue distribution, detected in epithelial cells in colon and jejunum (at protein level). Detected in epithelial cells in jejunum.

It localises to the apical cell membrane. The protein localises to the cell membrane. It is found in the cytoplasmic vesicle. Functionally, binds to membranes enriched in phosphatidylserine or phosphatidylglycerol in a calcium-dependent manner. Half-maximal membrane binding requires about 60 uM calcium. Does not bind to membranes that lack phospholipids with an acidic headgroup. In terms of biological role, binds to membranes enriched in phosphatidylserine or phosphatidylglycerol in a calcium-dependent manner, but requires higher calcium levels for membrane binding than isoform A. Half-maximal membrane binding requires about 320 uM calcium. The sequence is that of Annexin A13 (ANXA13) from Homo sapiens (Human).